The sequence spans 482 residues: Cis-aconitate decarboxylase-like protein oryM (482 aa).

The protein belongs to the PrpD family.

It functions in the pathway secondary metabolite biosynthesis. Its function is as follows. Cis-aconitate decarboxylase-like protein; part of the gene cluster that mediates the biosynthesis of oryzines, natural products with an unusual maleidride backbone. The two subunits of the fungal fatty acid synthase oryfasA and oryfasB probably form octenoic acid. This fatty acid is most likely activated by the acyl-CoA ligase oryP to give octenyl-CoA before the citrate synthase-like protein oryE catalyzes condensation with oxaloacetate to form tricarboxylic acid. The next steps of the pathways are conjectural, but a favorite possible route has been proposed, beginning with decarboxylation and concomitant dehydration by the decarboxylase oryM, followed by tautomerization, which may lead to the production of a diene intermediate. Reduction of this diene intermediate could give the known metabolite piliformic acid. On the pathway to oryzine B and oryzine A, however, hydroxylation of the diene by the alpha-ketoglutarate-dependent dioxygenase oryG and lactonisation by the lactonohydrolases oryH or oryL could give oryzine B directly. Finally, enoyl reduction by the dehydrogenase oryD would then convert oryzine B into oryzine A. This is Cis-aconitate decarboxylase-like protein oryM from Aspergillus oryzae (strain ATCC 42149 / RIB 40) (Yellow koji mold).